A 253-amino-acid polypeptide reads, in one-letter code: Type III pantothenate kinase (253 aa).

6–13 (DVGNTNIV) contacts ATP. 107–110 (GADR) contacts substrate. D109 functions as the Proton acceptor in the catalytic mechanism. Position 129 (D129) interacts with K(+). T132 serves as a coordination point for ATP. T184 is a binding site for substrate.

The protein belongs to the type III pantothenate kinase family. In terms of assembly, homodimer. It depends on NH4(+) as a cofactor. The cofactor is K(+).

The protein resides in the cytoplasm. It carries out the reaction (R)-pantothenate + ATP = (R)-4'-phosphopantothenate + ADP + H(+). The protein operates within cofactor biosynthesis; coenzyme A biosynthesis; CoA from (R)-pantothenate: step 1/5. In terms of biological role, catalyzes the phosphorylation of pantothenate (Pan), the first step in CoA biosynthesis. The polypeptide is Type III pantothenate kinase (Exiguobacterium sibiricum (strain DSM 17290 / CCUG 55495 / CIP 109462 / JCM 13490 / 255-15)).